Consider the following 725-residue polypeptide: MVEIDFNKENEEDFSDPPGFVDDVTDDVLVPDVLHKKPTIDEFEDNCVFIAGIPVVGADRLGKLQSVLKKVLERLDPAVKLYIPPSPEGGCLGVLLTEWADQRSAQFAVKSLNGYAFDKNHTFTARSFKDMKQLEAPSDHWTTPEKQAYNDVGDLWWWLQNERCRDQFAISHDKLGVPTVGVFTNMKGNDPELAGDADKAERANWTETVFTWSPHGSYLSTIHKQGIILWGGKDYARAHRFAHTNVQYIDFSPCETYLVTYAAPEESNSWGDCEKDSLRIWDVRTGELKKAFSTFELTGRTQLPTWPFFRWSFDEKYFACLKAPEKDKLEREQKINGISIFESEKFELYEGRPVNIENIKQFEWSPTSTVLAYYSECTDAVPAEFGLLQVPSMQRLRSARVHNVADAQMFWQKSGKRLAFYTMRFKKKEYRETGEVKYVGGCQYHVDIFEIDKKDVSLMNLPLSEPFIHFDWDPEGDKFCVLVGNTAKATPQVYKIEANSHAPKLVSKLDAGVHFNEVQFAPKGGWLAVLAKVSAGGNVYFIDTSLSEAKRTNVIEHPLFNKGYWDPTGRYFVTCSTLGGRAGADLGYRIFTFQGRELCRKNLDRLAQFKWRPRPPVKLSEQKQREIKKNLKKTAAKFIKQDDDEKCRASQEVVEKRRKIMAAFDIIRSRNREQLDATRDERISLRNGVDTEAQLDEDEFVDEEITIALSTSKTQAPLTEEEMRD.

The RRM domain maps to 46–130 (NCVFIAGIPV…HTFTARSFKD (85 aa)). WD repeat units lie at residues 202-240 (RANW…RAHR), 242-280 (AHTN…SLRI), 354-395 (VNIE…SMQR), 462-504 (PLSE…HAPK), 510-552 (DAGV…AKRT), and 554-594 (VIEH…FTFQ).

The protein belongs to the eIF-3 subunit B family. In terms of assembly, component of the eukaryotic translation initiation factor 3 (eIF-3) complex.

The protein localises to the cytoplasm. RNA-binding component of the eukaryotic translation initiation factor 3 (eIF-3) complex, which is involved in protein synthesis of a specialized repertoire of mRNAs and, together with other initiation factors, stimulates binding of mRNA and methionyl-tRNAi to the 40S ribosome. The eIF-3 complex specifically targets and initiates translation of a subset of mRNAs involved in cell proliferation. In Caenorhabditis elegans, this protein is Eukaryotic translation initiation factor 3 subunit B.